The sequence spans 462 residues: Glycerol-3-phosphate dehydrogenase [NAD(+)] GPDHC1, cytosolic (462 aa).

Residues 48–53 (GAGAWG), Lys-196, and Ala-235 each bind NAD(+). Lys-196 lines the substrate pocket. The active-site Proton acceptor is Lys-285. Positions 347 and 375 each coordinate NAD(+). 347–348 (RN) is a binding site for substrate.

Belongs to the NAD-dependent glycerol-3-phosphate dehydrogenase family. In terms of tissue distribution, expressed in roots, leaves, flowers and siliques.

It localises to the cytoplasm. The protein localises to the cytosol. The catalysed reaction is sn-glycerol 3-phosphate + NAD(+) = dihydroxyacetone phosphate + NADH + H(+). Functionally, involved in cell redox homeostasis. Required for maintaining a steady state cellular NADH/NAD(+) ratio through a mitochondrial glycerol-3-phosphate redox shuttle. May function with the mitochondrial FAD-dependent glycerol-3-phosphate dehydrogenase SDP6 to shuttle reducing equivalents into the mitochondria for respiration. The polypeptide is Glycerol-3-phosphate dehydrogenase [NAD(+)] GPDHC1, cytosolic (GPDHC1) (Arabidopsis thaliana (Mouse-ear cress)).